A 110-amino-acid polypeptide reads, in one-letter code: U1-lycotoxin-Ls1cc (110 aa).

The N-terminal stretch at 1–20 (MKFVLLFGVLLVTLFSYSSA) is a signal peptide. Positions 21-44 (EMLDDFDQADEDELLSLIEKEEAR) are excised as a propeptide. 4 disulfide bridges follow: Cys-47–Cys-62, Cys-54–Cys-71, Cys-61–Cys-89, and Cys-73–Cys-87.

The protein belongs to the neurotoxin 19 (CSTX) family. 03 subfamily. In terms of tissue distribution, expressed by the venom gland.

It localises to the secreted. This chain is U1-lycotoxin-Ls1cc, found in Lycosa singoriensis (Wolf spider).